A 374-amino-acid polypeptide reads, in one-letter code: Autophagy-related protein 18e (374 aa).

WD repeat units follow at residues 28–66, 72–117, 202–242, and 247–286; these read KSDL…KKSI, ESGF…CLSE, AHDS…LLQE, and VERA…LSFD.

Belongs to the WD repeat PROPPIN family. As to quaternary structure, component of the PI(3,5)P2 regulatory complex at least composed of ATG18, SAC/FIG4, FAB1 and VAC14.

It is found in the preautophagosomal structure membrane. The protein resides in the vacuole membrane. The PI(3,5)P2 regulatory complex regulates both the synthesis and turnover of phosphatidylinositol 3,5-bisphosphate (PtdIns(3,5)P2). Required for autophagy. This Arabidopsis thaliana (Mouse-ear cress) protein is Autophagy-related protein 18e (ATG18E).